The following is a 157-amino-acid chain: MICIIMGSESDLKIAEKAVNILKEFGVEFEVRVASAHRTPELVEEIVKNSKADVFIAIAGLAAHLPGVVASLTTKPVIAVPVDAKLDGLDALLSSVQMPPGIPVATVGIDRGENAAILALEILALKDENIAKKLIEYREKMKKKVYASDEKVKEMFK.

Substrate contacts are provided by Ser8, Asp11, and Arg38.

This sequence belongs to the AIR carboxylase family. Class I subfamily.

The catalysed reaction is 5-carboxyamino-1-(5-phospho-D-ribosyl)imidazole + H(+) = 5-amino-1-(5-phospho-D-ribosyl)imidazole-4-carboxylate. It functions in the pathway purine metabolism; IMP biosynthesis via de novo pathway; 5-amino-1-(5-phospho-D-ribosyl)imidazole-4-carboxylate from 5-amino-1-(5-phospho-D-ribosyl)imidazole (N5-CAIR route): step 2/2. Functionally, catalyzes the conversion of N5-carboxyaminoimidazole ribonucleotide (N5-CAIR) to 4-carboxy-5-aminoimidazole ribonucleotide (CAIR). The polypeptide is N5-carboxyaminoimidazole ribonucleotide mutase (Methanocaldococcus jannaschii (strain ATCC 43067 / DSM 2661 / JAL-1 / JCM 10045 / NBRC 100440) (Methanococcus jannaschii)).